The chain runs to 955 residues: Outer capsid protein VP2 (955 aa).

Belongs to the orbivirus VP2 family.

It is found in the virion. In terms of biological role, the VP2 protein is one of the two proteins (with VP5) which constitute the virus particle outer capsid. It is the major target of the host immunogenic response. Responsible for viral attachment to target host cell, probably by binding to sialic acid. This attachment induces virion internalization predominantly through clathrin-dependent endocytosis. The protein is Outer capsid protein VP2 (Segment-2) of Antilocapra americana (Pronghorn).